Consider the following 235-residue polypeptide: DNA repair protein RecO (235 aa).

Belongs to the RecO family.

Its function is as follows. Involved in DNA repair and RecF pathway recombination. The polypeptide is DNA repair protein RecO (Enterobacter sp. (strain 638)).